A 513-amino-acid polypeptide reads, in one-letter code: ATP synthase subunit alpha (513 aa).

169–176 (GDRQCGKT) serves as a coordination point for ATP.

The protein belongs to the ATPase alpha/beta chains family. As to quaternary structure, F-type ATPases have 2 components, CF(1) - the catalytic core - and CF(0) - the membrane proton channel. CF(1) has five subunits: alpha(3), beta(3), gamma(1), delta(1), epsilon(1). CF(0) has three main subunits: a(1), b(2) and c(9-12). The alpha and beta chains form an alternating ring which encloses part of the gamma chain. CF(1) is attached to CF(0) by a central stalk formed by the gamma and epsilon chains, while a peripheral stalk is formed by the delta and b chains.

The protein localises to the cell inner membrane. The enzyme catalyses ATP + H2O + 4 H(+)(in) = ADP + phosphate + 5 H(+)(out). Produces ATP from ADP in the presence of a proton gradient across the membrane. The alpha chain is a regulatory subunit. The chain is ATP synthase subunit alpha from Burkholderia orbicola (strain AU 1054).